Here is a 180-residue protein sequence, read N- to C-terminus: Peptidyl-tRNA hydrolase (180 aa).

Tyr-15 lines the tRNA pocket. Residue His-20 is the Proton acceptor of the active site. TRNA contacts are provided by Phe-67, Asn-69, and Asn-115.

This sequence belongs to the PTH family. As to quaternary structure, monomer.

The protein localises to the cytoplasm. The catalysed reaction is an N-acyl-L-alpha-aminoacyl-tRNA + H2O = an N-acyl-L-amino acid + a tRNA + H(+). Functionally, hydrolyzes ribosome-free peptidyl-tRNAs (with 1 or more amino acids incorporated), which drop off the ribosome during protein synthesis, or as a result of ribosome stalling. Its function is as follows. Catalyzes the release of premature peptidyl moieties from peptidyl-tRNA molecules trapped in stalled 50S ribosomal subunits, and thus maintains levels of free tRNAs and 50S ribosomes. The polypeptide is Peptidyl-tRNA hydrolase (Chlamydia pneumoniae (Chlamydophila pneumoniae)).